A 60-amino-acid chain; its full sequence is Cecropin-B type 2 (60 aa).

An N-terminal signal peptide occupies residues 1-24 (MNFSKLFALVLLIGLVLLTGQTEA). Ile-58 is subject to Isoleucine amide.

This sequence belongs to the cecropin family.

The protein resides in the secreted. Cecropins have lytic and antibacterial activity against several Gram-positive and Gram-negative bacteria. The polypeptide is Cecropin-B type 2 (CECB2) (Aedes albopictus (Asian tiger mosquito)).